Reading from the N-terminus, the 466-residue chain is Soluble pyridine nucleotide transhydrogenase (466 aa).

36–45 lines the FAD pocket; that stretch reads ERYQNVGGGC.

Belongs to the class-I pyridine nucleotide-disulfide oxidoreductase family. The cofactor is FAD.

The protein resides in the cytoplasm. It carries out the reaction NAD(+) + NADPH = NADH + NADP(+). Its function is as follows. Conversion of NADPH, generated by peripheral catabolic pathways, to NADH, which can enter the respiratory chain for energy generation. In Escherichia coli O6:K15:H31 (strain 536 / UPEC), this protein is Soluble pyridine nucleotide transhydrogenase.